A 24-amino-acid chain; its full sequence is Skin secreted peptide 1 (24 aa).

As to expression, expressed by the skin glands.

Its subcellular location is the secreted. This Ascaphus truei (Coastal tailed frog) protein is Skin secreted peptide 1.